Consider the following 492-residue polypeptide: MGFSALVASALCTFLLPLLLFLAAVRLWDLYCASGRDPSCPLPLPPGTMGLPFFGETLQMVLQRRKFLQMKRRKYGFIYKTHLFGRPTVRVMGAENVRHILLGEHRLVSVQWPASVRTILGSGCLSNLHNGQHKHRKKVIMQAFSRDALQHYVPVIQEEVSACLAQWLGAGPCLLVYPEVKRLMFRIAMRILLGFQPRQASPDGEQQLVEAFEEMIRNLFSLPIDVPFSGLYRGLRARNIIHAKIEENIRAKMARKEPEGGYKDALQLLMEHTQGNGEQLNMQELKESATELLFGGHETTASAATSLIAFLGLHHDVLQKVRKELQLKGLLSGPNQEKQLNMEFLEQLKYTGCVIKETLRLSPPVPGGFRIALKTLELNGYQIPKGWNVIYSICDTHDVADLFTDKDEFNPDRFMSPSPEDSSRFSFIPFGGGLRSCVGKEFAKVLLKIFTVELARSCDWQLLNGPPTMKTGPIVYPVDNLPAKFIGFSGQI.

Residue cysteine 437 coordinates heme.

This sequence belongs to the cytochrome P450 family. It depends on heme as a cofactor.

Its subcellular location is the endoplasmic reticulum membrane. It localises to the microsome membrane. The catalysed reaction is all-trans-retinoate + reduced [NADPH--hemoprotein reductase] + O2 = all-trans-(4S)-hydroxyretinoate + oxidized [NADPH--hemoprotein reductase] + H2O + H(+). It carries out the reaction all-trans-(4S)-hydroxyretinoate + reduced [NADPH--hemoprotein reductase] + O2 = all-trans-(4S,16)-dihydroxyretinoate + oxidized [NADPH--hemoprotein reductase] + H2O + H(+). The enzyme catalyses all-trans-retinoate + reduced [NADPH--hemoprotein reductase] + O2 = all-trans-18-hydroxyretinoate + oxidized [NADPH--hemoprotein reductase] + H2O + H(+). A cytochrome P450 monooxygenase involved in the metabolism of retinoates (RAs), the active metabolites of vitamin A, and critical signaling molecules in animals. RAs exist as at least four different isomers: all-trans-RA (atRA), 9-cis-RA, 13-cis-RA, and 9,13-dicis-RA, where atRA is considered to be the biologically active isomer, although 9-cis-RA and 13-cis-RA also have activity. Catalyzes the hydroxylation of atRA primarily at C-4 and C-18, thereby contributing to the regulation of atRA homeostasis and signaling. Hydroxylation of atRA limits its biological activity and initiates a degradative process leading to its eventual elimination. Involved in the convertion of atRA to all-trans-4-oxo-RA. Able to metabolize other RAs such as 9-cis, 13-cis and 9,13-di-cis RA. Can oxidize all-trans-13,14-dihydroretinoate (DRA) to metabolites which could include all-trans-4-oxo-DRA, all-trans-4-hydroxy-DRA, all-trans-5,8-epoxy-DRA, and all-trans-18-hydroxy-DRA. May play a role in the oxidative metabolism of xenobiotics such as tazarotenic acid. This is Cytochrome P450 26A1 (CYP26A1) from Gallus gallus (Chicken).